Reading from the N-terminus, the 462-residue chain is Argininosuccinate lyase (462 aa).

It belongs to the lyase 1 family. Argininosuccinate lyase subfamily.

It is found in the cytoplasm. The catalysed reaction is 2-(N(omega)-L-arginino)succinate = fumarate + L-arginine. It functions in the pathway amino-acid biosynthesis; L-arginine biosynthesis; L-arginine from L-ornithine and carbamoyl phosphate: step 3/3. The polypeptide is Argininosuccinate lyase (Bacillus cereus (strain ATCC 14579 / DSM 31 / CCUG 7414 / JCM 2152 / NBRC 15305 / NCIMB 9373 / NCTC 2599 / NRRL B-3711)).